Reading from the N-terminus, the 545-residue chain is Chaperonin GroEL (545 aa).

Residues Thr-29–Pro-32, Lys-50, Asp-86–Thr-90, Gly-415, and Asp-495 each bind ATP.

Belongs to the chaperonin (HSP60) family. As to quaternary structure, forms a cylinder of 14 subunits composed of two heptameric rings stacked back-to-back. Interacts with the co-chaperonin GroES.

It localises to the cytoplasm. The catalysed reaction is ATP + H2O + a folded polypeptide = ADP + phosphate + an unfolded polypeptide.. Together with its co-chaperonin GroES, plays an essential role in assisting protein folding. The GroEL-GroES system forms a nano-cage that allows encapsulation of the non-native substrate proteins and provides a physical environment optimized to promote and accelerate protein folding. The protein is Chaperonin GroEL of Bacteroides thetaiotaomicron (strain ATCC 29148 / DSM 2079 / JCM 5827 / CCUG 10774 / NCTC 10582 / VPI-5482 / E50).